Reading from the N-terminus, the 325-residue chain is Cytochrome c1, heme protein, mitochondrial (325 aa).

The transit peptide at 1 to 84 (MAAAAASLRG…AMALHSAVSA (84 aa)) directs the protein to the mitochondrion. The Mitochondrial intermembrane segment spans residues 85-281 (SDLELHPPSY…TFLRWASEPE (197 aa)). The Cytochrome c domain occupies 108–209 (TSIRRGFQVY…IVRARHGGED (102 aa)). Heme c contacts are provided by Cys-121, Cys-124, and His-125. Ser-182 bears the Phosphoserine mark. Position 244 (Met-244) interacts with heme c. The chain crosses the membrane as a helical span at residues 282–315 (HDHRKRMGLKMLMMMALLVPLVYTIKRHKWSVLK). Residues 316–325 (SRKLAYRPPK) lie on the Mitochondrial matrix side of the membrane.

Belongs to the cytochrome c family. As to quaternary structure, component of the ubiquinol-cytochrome c oxidoreductase (cytochrome b-c1 complex, complex III, CIII), a multisubunit enzyme composed of 11 subunits. The complex is composed of 3 respiratory subunits cytochrome b, cytochrome c1 and Rieske protein UQCRFS1, 2 core protein subunits UQCRC1/QCR1 and UQCRC2/QCR2, and 6 low-molecular weight protein subunits UQCRH/QCR6, UQCRB/QCR7, UQCRQ/QCR8, UQCR10/QCR9, UQCR11/QCR10 and subunit 9, the cleavage product of Rieske protein UQCRFS1. The complex exists as an obligatory dimer and forms supercomplexes (SCs) in the inner mitochondrial membrane with NADH-ubiquinone oxidoreductase (complex I, CI) and cytochrome c oxidase (complex IV, CIV), resulting in different assemblies (supercomplex SCI(1)III(2)IV(1) and megacomplex MCI(2)III(2)IV(2)). Interacts with FLVCR2; this interaction occurs in the absence of heme and is disrupted upon heme binding. Heme c serves as cofactor.

It localises to the mitochondrion inner membrane. The enzyme catalyses a quinol + 2 Fe(III)-[cytochrome c](out) = a quinone + 2 Fe(II)-[cytochrome c](out) + 2 H(+)(out). Its function is as follows. Component of the ubiquinol-cytochrome c oxidoreductase, a multisubunit transmembrane complex that is part of the mitochondrial electron transport chain which drives oxidative phosphorylation. The respiratory chain contains 3 multisubunit complexes succinate dehydrogenase (complex II, CII), ubiquinol-cytochrome c oxidoreductase (cytochrome b-c1 complex, complex III, CIII) and cytochrome c oxidase (complex IV, CIV), that cooperate to transfer electrons derived from NADH and succinate to molecular oxygen, creating an electrochemical gradient over the inner membrane that drives transmembrane transport and the ATP synthase. The cytochrome b-c1 complex catalyzes electron transfer from ubiquinol to cytochrome c, linking this redox reaction to translocation of protons across the mitochondrial inner membrane, with protons being carried across the membrane as hydrogens on the quinol. In the process called Q cycle, 2 protons are consumed from the matrix, 4 protons are released into the intermembrane space and 2 electrons are passed to cytochrome c. Cytochrome c1 is a catalytic core subunit containing a c-type heme. It transfers electrons from the [2Fe-2S] iron-sulfur cluster of the Rieske protein to cytochrome c. The polypeptide is Cytochrome c1, heme protein, mitochondrial (CYC1) (Homo sapiens (Human)).